Consider the following 522-residue polypeptide: MKVFVYLLVTFSLTNASPLRNRFNEDHDEFSKDDMARESFDTEEMYNAFLNRRDSSESQLEDHLLSHAKPLYDDFFPKDTSPDDDEDSYWLESRNDDGYDLAKRKRGYDDEEAYDDFDEVDDRADDEGARDVDESDFEEDDKLPAEEESKNDMDEETFEDEPEEDKEEAREEFAEDERADEREDDDADFDFNDEEDEDEVDNKAESDIFTPEDFAGVSDEAMDNFRDDNEEEYADESDDEAEEDSEETADDFEDDPEDESDETFRDEVEDESEENYQDDTEEGSEIKQNDETEEQPEKKFDADKEHEDAPEPLKEKLSDESKARAEDESDKSEDAAKEIKEPEDAVEDFEDGAKVSEDEAELLDDEAELSDDEAELSKDEAEQSSDEAEKSEDKAEKSEDEAELSEDEAKQSEDEAEKAEDAAGKESNDEGKKREDEAVKSKGIARDESEFAKAKKSNLALKRDENRPLAKGLRESAAHLRDFPSEKKSKDAAQGNIENELDYFKRNAFADSKDAEPYEFDK.

Positions 1–16 (MKVFVYLLVTFSLTNA) are cleaved as a signal peptide. Basic and acidic residues-rich tracts occupy residues 72 to 81 (YDDFFPKDTS) and 93 to 102 (SRNDDGYDLA). The tract at residues 72-497 (YDDFFPKDTS…KSKDAAQGNI (426 aa)) is disordered. Acidic residues predominate over residues 109 to 125 (DDEEAYDDFDEVDDRAD). Residues 142–152 (KLPAEEESKND) are compositionally biased toward basic and acidic residues. 4 stretches are compositionally biased toward acidic residues: residues 153–166 (MDEE…EEDK), 173–200 (FAED…EDEV), 228–261 (DNEE…DESD), and 267–283 (EVED…TEEG). Residues 284–343 (SEIKQNDETEEQPEKKFDADKEHEDAPEPLKEKLSDESKARAEDESDKSEDAAKEIKEPE) show a composition bias toward basic and acidic residues. Residues 319–465 (DESKARAEDE…KSNLALKRDE (147 aa)) adopt a coiled-coil conformation. The segment covering 358–374 (DEAELLDDEAELSDDEA) has biased composition (acidic residues). Basic and acidic residues-rich tracts occupy residues 375 to 397 (ELSK…KAEK), 407 to 453 (DEAK…EFAK), and 461 to 491 (LKRD…KSKD).

In terms of tissue distribution, component of the acid-soluble organic matrix of the aragonitic skeleton (at protein level).

The protein resides in the secreted. This chain is Aspartic and glutamic acid-rich protein, found in Acropora millepora (Staghorn coral).